Here is a 216-residue protein sequence, read N- to C-terminus: MNTIIPISPINNLKTRLSEFLTLEERKNLLFNMLRDIFKALKGLNIYAISKDPEILEFCNNLGAKTIEEKGKGLNQALNQAFSVVNEDLLIVPADIPLIRESHIKEIKKLKEEFEAIIAPSRGGGTNLLYLSRASLINLRYEGFSFLKHLEEFKRNKVSYYIYDSFYLSIDINTPEDLGEIFIHGDGSYTKRYLESLNIKVEPKHSSAGRFKIYRE.

This sequence belongs to the CofC family. In terms of assembly, homodimer.

The catalysed reaction is (2S)-2-phospholactate + GTP + H(+) = (2S)-lactyl-2-diphospho-5'-guanosine + diphosphate. It participates in cofactor biosynthesis; coenzyme F420 biosynthesis. Its function is as follows. Guanylyltransferase that catalyzes the activation of (2S)-2-phospholactate (2-PL) as (2S)-lactyl-2-diphospho-5'-guanosine, via the condensation of 2-PL with GTP. It is involved in the biosynthesis of coenzyme F420, a hydride carrier cofactor. The sequence is that of 2-phospho-L-lactate guanylyltransferase from Methanocaldococcus infernus (strain DSM 11812 / JCM 15783 / ME).